We begin with the raw amino-acid sequence, 211 residues long: DNA-directed RNA polymerases I, II, and III subunit RPABC1 (211 aa).

This sequence belongs to the archaeal Rpo5/eukaryotic RPB5 RNA polymerase subunit family. Component of the RNA polymerase I (Pol I), RNA polymerase II (Pol II) and RNA polymerase III (Pol III) complexes consisting of at least 13, 12 and 17 subunits, respectively. In RNA Pol II, this subunit is present in 2-fold molar excess over the other subunits.

It is found in the nucleus. Functionally, DNA-dependent RNA polymerase catalyzes the transcription of DNA into RNA using the four ribonucleoside triphosphates as substrates. Common component of RNA polymerases I, II and III which synthesize ribosomal RNA precursors, mRNA precursors and many functional non-coding RNAs, and small RNAs, such as 5S rRNA and tRNAs, respectively. Pol II is the central component of the basal RNA polymerase II transcription machinery. Pols are composed of mobile elements that move relative to each other. In Pol II, RPB5 is part of the lower jaw surrounding the central large cleft and thought to grab the incoming DNA template. Seems to be the major component in this process. In Caenorhabditis elegans, this protein is DNA-directed RNA polymerases I, II, and III subunit RPABC1 (rpb-5).